The following is a 69-amino-acid chain: Cap-specific mRNA (nucleoside-2'-O-)-methyltransferase (69 aa).

Tyr22 provides a ligand contact to mRNA. Positions 39, 66, and 68 each coordinate S-adenosyl-L-methionine.

It belongs to the class I-like SAM-binding methyltransferase superfamily. Poxvirus/kinetoplastid 2'-O-MTase family. Interacts with poly(A) polymerase catalytic subunit OPG063. Interacts with OPG109 and OPG123; these interactions might help linking transcription to capping and polyadenylation.

Its subcellular location is the virion. The enzyme catalyses a 5'-end (N(7)-methyl 5'-triphosphoguanosine)-ribonucleoside in mRNA + S-adenosyl-L-methionine = a 5'-end (N(7)-methyl 5'-triphosphoguanosine)-(2'-O-methyl-ribonucleoside) in mRNA + S-adenosyl-L-homocysteine + H(+). Displays methyltransferase, positive regulation of the poly(A) polymerase and transcription elongation activities. Involved in the modification of both mRNA ends and in intermediate and late gene positive transcription elongation. At the mRNAs 5' end, methylates the ribose 2' OH group of the first transcribed nucleotide, thereby producing a 2'-O-methylpurine cap. At the 3' end, functions as a processivity factor which stimulates the activity of the viral poly(A) polymerase OPG063 that creates mRNA's poly(A) tail. In the presence of OPG102, OPG063 does not dissociate from the RNA allowing tail elongation to around 250 adenylates. In Sus scrofa (Pig), this protein is Cap-specific mRNA (nucleoside-2'-O-)-methyltransferase (OPG102).